A 364-amino-acid chain; its full sequence is Esculetin O-methyltransferase (364 aa).

N132 is a bergaptol binding site. S-adenosyl-L-homocysteine-binding residues include G209, D232, D252, M253, M265, and K266. Residue H270 participates in bergaptol binding. The active-site Proton acceptor is H270.

The protein belongs to the class I-like SAM-binding methyltransferase superfamily. Cation-independent O-methyltransferase family. COMT subfamily. Homodimer. Expressed ubiquitously.

It carries out the reaction bergaptol + S-adenosyl-L-methionine = bergapten + S-adenosyl-L-homocysteine. The catalysed reaction is xanthotoxol + S-adenosyl-L-methionine = xanthotoxin + S-adenosyl-L-homocysteine + H(+). It catalyses the reaction esculetin + S-adenosyl-L-methionine = isoscopoletin + S-adenosyl-L-homocysteine + H(+). The enzyme catalyses esculetin + S-adenosyl-L-methionine = scopoletin + S-adenosyl-L-homocysteine + H(+). Its pathway is aromatic compound metabolism. The protein operates within secondary metabolite biosynthesis. With respect to regulation, inhibited by zinc Zn(2+), copper Cu(2+) and silver Ag(+) ions. Its function is as follows. O-methyltransferase involved in the biosynthesis of methoxylated coumarins natural products such as isoscopoletin, scopoletin, xanthotoxin and bergapten, photosensitizers used for medical purpose such as treating psoriasis and vitiligo or facilitating resistance to microbial infection and other stresses. Catalyzes the methylation of esculetin, bergaptol and xanthotoxol, but seems inactive on scopoletin and isoscopoletin. This chain is Esculetin O-methyltransferase, found in Kitagawia praeruptora (Peucedanum praeruptorum).